The sequence spans 423 residues: Serine hydroxymethyltransferase (423 aa).

(6S)-5,6,7,8-tetrahydrofolate is bound by residues Leu126 and 130–132; that span reads GHL. Lys235 carries the post-translational modification N6-(pyridoxal phosphate)lysine.

It belongs to the SHMT family. In terms of assembly, homodimer. Requires pyridoxal 5'-phosphate as cofactor.

It localises to the cytoplasm. It carries out the reaction (6R)-5,10-methylene-5,6,7,8-tetrahydrofolate + glycine + H2O = (6S)-5,6,7,8-tetrahydrofolate + L-serine. The protein operates within one-carbon metabolism; tetrahydrofolate interconversion. It functions in the pathway amino-acid biosynthesis; glycine biosynthesis; glycine from L-serine: step 1/1. Catalyzes the reversible interconversion of serine and glycine with tetrahydrofolate (THF) serving as the one-carbon carrier. This reaction serves as the major source of one-carbon groups required for the biosynthesis of purines, thymidylate, methionine, and other important biomolecules. Also exhibits THF-independent aldolase activity toward beta-hydroxyamino acids, producing glycine and aldehydes, via a retro-aldol mechanism. The polypeptide is Serine hydroxymethyltransferase (Sorangium cellulosum (strain So ce56) (Polyangium cellulosum (strain So ce56))).